A 225-amino-acid polypeptide reads, in one-letter code: MSYTIYLVEDEDNLNELLTKYLENEGWNITSFTKGEDARKKMTPSPHLWILDIMLPDTDGYTLIKEIKAKDPDVPVIFISARDADIDRVLGLELGSNDYISKPFLPRELIIRVQKLLQLVYKEAPPVQKNEIAVSSYRVAEDAREVYDENGNIINLTSKEFDLLLLFIHHKGHPYSREDILLKVWGHDYFGTDRVVDDLVRRLRRKMPELKVETIYGFGYRMMSS.

Residues 4-117 enclose the Response regulatory domain; sequence TIYLVEDEDN…ELIIRVQKLL (114 aa). Asp52 carries the 4-aspartylphosphate modification. A DNA-binding region (ompR/PhoB-type) is located at residues 129–224; the sequence is KNEIAVSSYR…IYGFGYRMMS (96 aa).

In terms of processing, phosphorylated by CssS.

The protein resides in the cytoplasm. Its function is as follows. Member of the two-component regulatory system CssS/CssR required to control the cellular response to secretion stress. The protein is Transcriptional regulatory protein CssR (cssR) of Bacillus subtilis (strain 168).